Here is a 152-residue protein sequence, read N- to C-terminus: Probable histone H2A.3 (152 aa).

Disordered regions lie at residues 1–25 (MDASTKTTKKGAGGRKGGGPRKKSV) and 129–152 (KTERANTGGKEPKTTKAGKSPKKA). Basic residues predominate over residues 7-25 (TTKKGAGGRKGGGPRKKSV). The segment covering 129 to 142 (KTERANTGGKEPKT) has biased composition (basic and acidic residues). The SPKK motif motif lies at 148-151 (SPKK).

This sequence belongs to the histone H2A family. In terms of assembly, the nucleosome is a histone octamer containing two molecules each of H2A, H2B, H3 and H4 assembled in one H3-H4 heterotetramer and two H2A-H2B heterodimers. The octamer wraps approximately 147 bp of DNA.

Its subcellular location is the nucleus. The protein resides in the chromosome. Its function is as follows. Core component of nucleosome. Nucleosomes wrap and compact DNA into chromatin, limiting DNA accessibility to the cellular machineries which require DNA as a template. Histones thereby play a central role in transcription regulation, DNA repair, DNA replication and chromosomal stability. DNA accessibility is regulated via a complex set of post-translational modifications of histones, also called histone code, and nucleosome remodeling. The polypeptide is Probable histone H2A.3 (Medicago truncatula (Barrel medic)).